Reading from the N-terminus, the 822-residue chain is Protein smoothened (822 aa).

An N-terminal signal peptide occupies residues 1–28; the sequence is MSSKRPCSIVGSFWMLWIWTATSMVARA. At 29 to 212 the chain is on the extracellular side; it reads VILHPNETIF…EDEHSDMHSY (184 aa). Asn34 is a glycosylation site (N-linked (GlcNAc...) asparagine). 5 disulfides stabilise this stretch: Cys42/Cys157, Cys48/Cys112, Cys56/Cys105, Cys96/Cys132, and Cys125/Cys147. An FZ domain is found at 43 to 160; sequence KKSTTCEVLK…EQFPKGCQNE (118 aa). A cholesterol-binding site is contributed by Asp73. N-linked (GlcNAc...) asparagine glycosylation occurs at Asn167. 3 disulfides stabilise this stretch: Cys172–Cys192, Cys196–Cys274, and Cys293–Cys369. A helical transmembrane segment spans residues 213 to 233; that stretch reads IAVFGTITLLCTFFTLATFLA. Over 234–241 the chain is Cytoplasmic; that stretch reads DWKNSNRY. A helical membrane pass occupies residues 242–262; it reads PAVILFYVNACFFIGSIGWLA. At 263-293 the chain is on the extracellular side; it reads QFMDGARNEIVCKSDNTMRLGEPSSTETLSC. Residues 294–314 traverse the membrane as a helical segment; the sequence is VIIFVIVYYSLMSGVIWFVML. The Cytoplasmic portion of the chain corresponds to 315–335; that stretch reads TYAWHTSFKALGTTHQPLSGK. A helical membrane pass occupies residues 336-356; it reads TSYFHLVTWSIPFILTVAILA. The Extracellular segment spans residues 357-381; it reads NSQVDADSVSGICFVGYRYYEYRAG. Tyr373 contacts cholesterol. Residues 382 to 402 form a helical membrane-spanning segment; the sequence is FVLAPIGFVLVIGGYFLIRGV. Residues 403-430 are Cytoplasmic-facing; sequence MTLFSIKSNHPGLLSEKAASKINETMLR. The helical transmembrane segment at 431-451 threads the bilayer; it reads LGIFGFLAFGFVLITFGCHFY. Residues 452–503 are Extracellular-facing; sequence DFFNQAEWERSFREYVLCEANVTIAHQTNKPIPECAIKNRPSLLVGKINLFS. Residues Cys469 and Cys486 are joined by a disulfide bond. A glycan (N-linked (GlcNAc...) asparagine) is linked at Asn472. A helical transmembrane segment spans residues 504-524; that stretch reads MFGTGIAMSTWVWTKATILIW. At 525 to 822 the chain is on the cytoplasmic side; the sequence is KRTWFRIIGR…AELLDADSDF (298 aa). Positions 645–687 are disordered; the sequence is MMKRKKKKKKRRKEVRPAGPAADEGNPAYHRREFGPSAVPRLP. Residues 647–658 show a composition bias toward basic residues; that stretch reads KRKKKKKKRRKE.

Belongs to the G-protein coupled receptor Fz/Smo family. Monomer.

The protein resides in the cell membrane. It is found in the cell projection. The protein localises to the cilium. Its function is as follows. G protein-coupled receptor which associates with the patched protein (ptch) to transduce Hedgehog protein signaling. Binding of sonic hedgehog (shh) to its receptor patched prevents inhibition of smoothened (smo) by patched. When active, smo binds to and sequesters protein kinase A catalytic subunit prkaca at the cell membrane, preventing prkaca-mediated phosphorylation of gli transcription factors which releases the gli proteins from prkaca-mediated inhibition and allows for transcriptional activation of Hedgehog signaling pathway target genes. Required for the development of primary and secondary motoneurons but not for the specification of midbrain dopaminergic neurons or development of the medial floor plate. Required for induction of lateral floor plate and posterior motoneurons, anterior neural plate patterning, dorsoventral forebrain patterning, dorsoventral retinal patterning, optic stalk development, and formation of the forebrain primary axonal scaffold. Required to regulate the formation of a subset of cerebellar neurons by limiting wnt1 expression which controls cerebellar expression of transcription factor olig2. Required for development of the pancreas. Required for muscle development. Required for the formation of a single continuous intestinal lumen from multiple discontinuous lumens, probably by regulating remodeling through rab11a-mediated trafficking to facilitate lumen fusion. Required for development of the adenohypophysis. Required for anteroposterior patterning of the otic vesicle. Required for development of the anterior craniofacial skeleton. Required for patterning of the caudal fin. Required during gastrulation and early somitogenesis stages to promote cardiomyocyte formation by regulating the specification of myocardial progenitors. Required for induction of arterial endothelial cell formation by repressing venous cell fate. The protein is Protein smoothened of Danio rerio (Zebrafish).